A 285-amino-acid polypeptide reads, in one-letter code: ATP phosphoribosyltransferase (285 aa).

It belongs to the ATP phosphoribosyltransferase family. Long subfamily. Mg(2+) is required as a cofactor.

It localises to the cytoplasm. The enzyme catalyses 1-(5-phospho-beta-D-ribosyl)-ATP + diphosphate = 5-phospho-alpha-D-ribose 1-diphosphate + ATP. The protein operates within amino-acid biosynthesis; L-histidine biosynthesis; L-histidine from 5-phospho-alpha-D-ribose 1-diphosphate: step 1/9. Its activity is regulated as follows. Feedback inhibited by histidine. Functionally, catalyzes the condensation of ATP and 5-phosphoribose 1-diphosphate to form N'-(5'-phosphoribosyl)-ATP (PR-ATP). Has a crucial role in the pathway because the rate of histidine biosynthesis seems to be controlled primarily by regulation of HisG enzymatic activity. The chain is ATP phosphoribosyltransferase from Sulfolobus acidocaldarius (strain ATCC 33909 / DSM 639 / JCM 8929 / NBRC 15157 / NCIMB 11770).